The sequence spans 493 residues: Monodehydroascorbate reductase, chloroplastic/mitochondrial (493 aa).

The transit peptide at 1–51 (MSAVRRVMALASTTLPTKSGLSLWCPSSPSLARRFPARFSPIGSRIASRSL) directs the protein to the chloroplast and mitochondrion. Residues 68–71 (GGNA), Glu95, Arg102, Lys107, and 201–202 (RE) contribute to the FAD site. NAD(+) is bound by residues 224–230 (GGYIGME), Glu248, Arg254, and Gly313. 226-230 (YIGME) provides a ligand contact to NADP(+). Arg254 and Gly313 together coordinate NADP(+). Asp351 provides a ligand contact to FAD. Position 367 to 368 (367 to 368 (EH)) interacts with NAD(+). Position 367 to 368 (367 to 368 (EH)) interacts with NADP(+). Val369 serves as a coordination point for FAD. Arg373 is a binding site for L-ascorbate. Tyr398 contributes to the FAD binding site. Tyr398 provides a ligand contact to NAD(+). Tyr398 contacts NADP(+). Arg400 is an L-ascorbate binding site.

The protein belongs to the FAD-dependent oxidoreductase family. In terms of assembly, interacts in vitro with TRXy. Requires FAD as cofactor.

It is found in the plastid. Its subcellular location is the chloroplast. The protein resides in the mitochondrion. The catalysed reaction is 2 monodehydro-L-ascorbate radical + NADH + H(+) = 2 L-ascorbate + NAD(+). It catalyses the reaction 2,4,6-trinitrotoluene + NADH = 2,4,6-trinitrotoluene radical + e(-) + NAD(+). Redox regulation of the activity by thioredoxin TRXy1. Its function is as follows. Catalyzes the conversion of monodehydroascorbate (MDA) to ascorbate, oxidizing NADH in the process. Mediates phytotoxicity of 2,4,6-trinitrotoluene (TNT), an explosive and environmental pollutant, by reducing TNT and forming a nitro radical that spontaneously reacts with atmospheric oxygen, generating reactive superoxide. Can also use 1-chloro-2,4-dinitrobenzene (CDNB) as substrate, but not 1-chloro-4-nitrobenzene (CNB). The chain is Monodehydroascorbate reductase, chloroplastic/mitochondrial from Arabidopsis thaliana (Mouse-ear cress).